Consider the following 156-residue polypeptide: Ribosome maturation factor RimP (156 aa).

This sequence belongs to the RimP family.

Its subcellular location is the cytoplasm. In terms of biological role, required for maturation of 30S ribosomal subunits. In Synechococcus sp. (strain JA-2-3B'a(2-13)) (Cyanobacteria bacterium Yellowstone B-Prime), this protein is Ribosome maturation factor RimP.